The sequence spans 296 residues: Maltose/maltodextrin transport system permease protein MalG (296 aa).

Topologically, residues 1–12 are cytoplasmic; sequence MAMVQGKSLKYR. Residues 13–35 traverse the membrane as a helical segment; sequence VWATHIAMWAFLALIIFPLLMII. Over 36 to 88 the chain is Periplasmic; that stretch reads AISFREGNFATGSLIPDNPTLDHWKLALGFSITNADGTVTPPPFPVMTWLWNS. The 197-residue stretch at 85 to 281 folds into the ABC transmembrane type-1 domain; sequence LWNSVKVGGI…VPITAVFLLA (197 aa). A helical transmembrane segment spans residues 89–111; that stretch reads VKVGGISAILIVALSTTSAYAFA. Residues 112–123 lie on the Cytoplasmic side of the membrane; that stretch reads RMKFKGKNTILK. The helical transmembrane segment at 124 to 143 threads the bilayer; it reads AMMIFQMFPAVLALVALYAL. The Periplasmic segment spans residues 144–152; the sequence is FDKLGQYIP. A helical membrane pass occupies residues 153–175; the sequence is FLGLNTHGGLIFAYLGGIALHVW. The Cytoplasmic portion of the chain corresponds to 176–204; that stretch reads TIKGYFESIDSSLEEAAALDGATPWQAFR. The helical transmembrane segment at 205–227 threads the bilayer; the sequence is LVLLPLSVPILAVVFILSFIMVI. The Periplasmic segment spans residues 228–257; it reads GEVPVASLLLSDVDSYTLAVGMQQYLYPQN. Residues 258–280 traverse the membrane as a helical segment; it reads YLWGDFAAAAVLSAVPITAVFLL. Residues 281 to 296 are Cytoplasmic-facing; that stretch reads AQRWLVGGLTAGGVKG.

This sequence belongs to the binding-protein-dependent transport system permease family. MalFG subfamily. As to quaternary structure, the complex is composed of two ATP-binding proteins (MalK), two transmembrane proteins (MalG and MalF) and a solute-binding protein (MalE).

It is found in the cell inner membrane. Part of the ABC transporter complex MalEFGK involved in maltose/maltodextrin import. Probably responsible for the translocation of the substrate across the membrane. This is Maltose/maltodextrin transport system permease protein MalG (malG) from Vibrio parahaemolyticus serotype O3:K6 (strain RIMD 2210633).